Reading from the N-terminus, the 138-residue chain is ATP synthase epsilon chain (138 aa).

Belongs to the ATPase epsilon chain family. In terms of assembly, F-type ATPases have 2 components, CF(1) - the catalytic core - and CF(0) - the membrane proton channel. CF(1) has five subunits: alpha(3), beta(3), gamma(1), delta(1), epsilon(1). CF(0) has three main subunits: a, b and c.

It is found in the cellular thylakoid membrane. Produces ATP from ADP in the presence of a proton gradient across the membrane. This is ATP synthase epsilon chain from Cyanothece sp. (strain PCC 7425 / ATCC 29141).